A 465-amino-acid polypeptide reads, in one-letter code: Ribulose bisphosphate carboxylase large chain (465 aa).

K4 bears the N6,N6,N6-trimethyllysine mark. Positions 113 and 163 each coordinate substrate. K165 serves as the catalytic Proton acceptor. Substrate is bound at residue K167. Positions 191, 193, and 194 each coordinate Mg(2+). K191 bears the N6-carboxylysine mark. H284 acts as the Proton acceptor in catalysis. Positions 285, 317, and 369 each coordinate substrate.

It belongs to the RuBisCO large chain family. Type I subfamily. As to quaternary structure, heterohexadecamer of 8 large chains and 8 small chains; disulfide-linked. The disulfide link is formed within the large subunit homodimers. It depends on Mg(2+) as a cofactor. Post-translationally, the disulfide bond which can form in the large chain dimeric partners within the hexadecamer appears to be associated with oxidative stress and protein turnover.

The protein localises to the plastid. The protein resides in the chloroplast. The catalysed reaction is 2 (2R)-3-phosphoglycerate + 2 H(+) = D-ribulose 1,5-bisphosphate + CO2 + H2O. The enzyme catalyses D-ribulose 1,5-bisphosphate + O2 = 2-phosphoglycolate + (2R)-3-phosphoglycerate + 2 H(+). RuBisCO catalyzes two reactions: the carboxylation of D-ribulose 1,5-bisphosphate, the primary event in carbon dioxide fixation, as well as the oxidative fragmentation of the pentose substrate in the photorespiration process. Both reactions occur simultaneously and in competition at the same active site. The sequence is that of Ribulose bisphosphate carboxylase large chain from Epacris sp.